The following is a 367-amino-acid chain: UDP-N-acetylglucosamine--N-acetylmuramyl-(pentapeptide) pyrophosphoryl-undecaprenol N-acetylglucosamine transferase (367 aa).

UDP-N-acetyl-alpha-D-glucosamine-binding positions include 15–17, Asn-127, Arg-163, Ser-191, Ile-249, and Gln-294; that span reads TGG.

This sequence belongs to the glycosyltransferase 28 family. MurG subfamily.

It localises to the cell inner membrane. The enzyme catalyses di-trans,octa-cis-undecaprenyl diphospho-N-acetyl-alpha-D-muramoyl-L-alanyl-D-glutamyl-meso-2,6-diaminopimeloyl-D-alanyl-D-alanine + UDP-N-acetyl-alpha-D-glucosamine = di-trans,octa-cis-undecaprenyl diphospho-[N-acetyl-alpha-D-glucosaminyl-(1-&gt;4)]-N-acetyl-alpha-D-muramoyl-L-alanyl-D-glutamyl-meso-2,6-diaminopimeloyl-D-alanyl-D-alanine + UDP + H(+). Its pathway is cell wall biogenesis; peptidoglycan biosynthesis. Cell wall formation. Catalyzes the transfer of a GlcNAc subunit on undecaprenyl-pyrophosphoryl-MurNAc-pentapeptide (lipid intermediate I) to form undecaprenyl-pyrophosphoryl-MurNAc-(pentapeptide)GlcNAc (lipid intermediate II). The polypeptide is UDP-N-acetylglucosamine--N-acetylmuramyl-(pentapeptide) pyrophosphoryl-undecaprenol N-acetylglucosamine transferase (Burkholderia lata (strain ATCC 17760 / DSM 23089 / LMG 22485 / NCIMB 9086 / R18194 / 383)).